The sequence spans 421 residues: Testin (421 aa).

Residues Met92 to Asn199 enclose the PET domain. The tract at residues Glu133–Cys164 is disordered. Over residues Pro155 to Cys164 the composition is skewed to basic and acidic residues. LIM zinc-binding domains are found at residues Tyr234–Glu297, Pro299–Val359, and Gln362–Ser421.

This sequence belongs to the prickle / espinas / testin family. As to quaternary structure, interacts via LIM domain 1 with ZYX. Interacts (via LIM domain 3) with ENAH and VASP. Interacts with ALKBH4, talin, actin, alpha-actinin, GRIP1 and PXN. Interacts (via LIM domain 2) with ACTL7A (via N-terminus). Heterodimer with ACTL7A; the heterodimer interacts with ENAH to form a heterotrimer.

The protein localises to the cytoplasm. Its subcellular location is the cell junction. It localises to the focal adhesion. Its function is as follows. Scaffold protein that may play a role in cell adhesion, cell spreading and in the reorganization of the actin cytoskeleton. Plays a role in the regulation of cell proliferation. May act as a tumor suppressor. The polypeptide is Testin (TES) (Sus scrofa (Pig)).